A 184-amino-acid polypeptide reads, in one-letter code: Ribosome-recycling factor (184 aa).

This sequence belongs to the RRF family.

The protein localises to the cytoplasm. Responsible for the release of ribosomes from messenger RNA at the termination of protein biosynthesis. May increase the efficiency of translation by recycling ribosomes from one round of translation to another. In Lachnoclostridium phytofermentans (strain ATCC 700394 / DSM 18823 / ISDg) (Clostridium phytofermentans), this protein is Ribosome-recycling factor.